The following is a 173-amino-acid chain: Dual-action ribosomal maturation protein DarP (173 aa).

Belongs to the DarP family.

The protein resides in the cytoplasm. In terms of biological role, member of a network of 50S ribosomal subunit biogenesis factors which assembles along the 30S-50S interface, preventing incorrect 23S rRNA structures from forming. Promotes peptidyl transferase center (PTC) maturation. In Pseudomonas syringae pv. tomato (strain ATCC BAA-871 / DC3000), this protein is Dual-action ribosomal maturation protein DarP.